The sequence spans 203 residues: Small ribosomal subunit protein uS4c (203 aa).

Residues 18-42 form a disordered region; that stretch reads LPGLTSKRPKNRKDSMNMNRSSSRK. Residues 33-42 are compositionally biased toward polar residues; that stretch reads MNMNRSSSRK. The 62-residue stretch at 91-152 folds into the S4 RNA-binding domain; that stretch reads MRLDNIIFRL…QPRLRAIIKK (62 aa).

It belongs to the universal ribosomal protein uS4 family. In terms of assembly, part of the 30S ribosomal subunit. Contacts protein S5. The interaction surface between S4 and S5 is involved in control of translational fidelity.

The protein localises to the plastid. It is found in the chloroplast. One of the primary rRNA binding proteins, it binds directly to 16S rRNA where it nucleates assembly of the body of the 30S subunit. In terms of biological role, with S5 and S12 plays an important role in translational accuracy. The sequence is that of Small ribosomal subunit protein uS4c (rps4) from Pinus koraiensis (Korean pine).